A 29-amino-acid chain; its full sequence is Galanin (29 aa).

A29 is subject to Alanine amide.

The protein belongs to the galanin family.

It localises to the secreted. Functionally, contracts smooth muscle of the gastrointestinal and genitourinary tract, regulates growth hormone release, modulates insulin release, and may be involved in the control of adrenal secretion. The chain is Galanin (GAL) from Ovis aries (Sheep).